We begin with the raw amino-acid sequence, 2748 residues long: Nuclear migration protein NUM1 (2748 aa).

Positions 1 to 10 are enriched in basic residues; it reads MSHNNRHKKN. Disordered regions lie at residues 1-36 and 290-312; these read MSHN…VSTN and YYQK…GTTS. Polar residues predominate over residues 17–36; the sequence is AGQYANSIDNSLSQESVSTN. Residues 293–304 show a composition bias toward low complexity; it reads KQHTSDTTVTSD. 12 tandem repeats follow at residues 593 to 656, 657 to 727, 728 to 798, 799 to 862, 863 to 926, 927 to 990, 991 to 1054, 1055 to 1118, 1119 to 1182, 1183 to 1246, 1247 to 1310, and 1311 to 1374. The 13 X tandem repeats stretch occupies residues 593–1384; that stretch reads PSLEYLVEHA…PSLEYLVKHA (792 aa). Residues Ser611, Ser675, and Ser746 each carry the phosphoserine modification. Residues Ser881, Ser945, and Ser1009 each carry the phosphoserine modification. Ser1201, Ser1265, and Ser1329 each carry phosphoserine. Residues 1375–1384 form a 13; truncated repeat; it reads PSLEYLVKHA. The tract at residues 2111–2133 is disordered; that stretch reads ERAERIDEQSINTTSSNSTTTSS. Low complexity predominate over residues 2122-2133; that stretch reads NTTSSNSTTTSS. Ser2162, Ser2164, Ser2197, Ser2217, Ser2220, Ser2221, Ser2360, and Ser2424 each carry phosphoserine. Positions 2444–2460 are enriched in basic and acidic residues; the sequence is KEDKKGQATASKHEYVS. The segment at 2444-2536 is disordered; it reads KEDKKGQATA…HSSRNTPASR (93 aa). The segment covering 2465–2474 has biased composition (polar residues); the sequence is NKTSTVSTKS. Positions 2492–2503 are enriched in basic and acidic residues; it reads SESHPQIEEQSH. Ser2494 is subject to Phosphoserine. Residues 2504-2514 are compositionally biased toward basic residues; sequence RTNHHKHHKRQ. Low complexity predominate over residues 2516–2532; that stretch reads SLNSNSTSKTTHSSRNT. Phosphoserine is present on Ser2545. Positions 2573 to 2683 constitute a PH domain; that stretch reads QTVIGEYLFK…WYNSLRYLLQ (111 aa). The tract at residues 2707-2748 is disordered; it reads IFPLPGENTKSSSKRLSASRRSVSTRSLRHRVPQSRSFGNLR. Low complexity predominate over residues 2720-2730; sequence KRLSASRRSVS.

In terms of assembly, interacts with PAC11 when DYN1 is present, and TUB3.

It localises to the bud tip. Functionally, controls nuclear migration. NUM1 specifically controls the interaction of the bud neck cytoskeleton with the pre-divisional G2 nucleus. Functions in dynein-anchoring. During late anaphase forms dynein-interacting cortical microtubule capture sites at both cellular poles. This leads to dynein-dependent sliding of the microtubules in the bud. This Saccharomyces cerevisiae (strain ATCC 204508 / S288c) (Baker's yeast) protein is Nuclear migration protein NUM1 (NUM1).